The primary structure comprises 326 residues: Tagatose 1,6-diphosphate aldolase (326 aa).

The protein belongs to the aldolase LacD family.

The enzyme catalyses D-tagatofuranose 1,6-bisphosphate = D-glyceraldehyde 3-phosphate + dihydroxyacetone phosphate. It participates in carbohydrate metabolism; D-tagatose 6-phosphate degradation; D-glyceraldehyde 3-phosphate and glycerone phosphate from D-tagatose 6-phosphate: step 2/2. The protein is Tagatose 1,6-diphosphate aldolase of Staphylococcus aureus (strain Mu3 / ATCC 700698).